Here is a 125-residue protein sequence, read N- to C-terminus: Methylglyoxal synthase (125 aa).

Residues 1 to 125 enclose the MGS-like domain; the sequence is MTERLRIALI…TAEKLIKALD (125 aa). Substrate is bound by residues His-12, Lys-16, 38 to 41, and 59 to 60; these read TGTT and SG. The active-site Proton donor/acceptor is the Asp-65. His-92 contacts substrate.

This sequence belongs to the methylglyoxal synthase family.

The catalysed reaction is dihydroxyacetone phosphate = methylglyoxal + phosphate. Catalyzes the formation of methylglyoxal from dihydroxyacetone phosphate. The protein is Methylglyoxal synthase of Brucella anthropi (strain ATCC 49188 / DSM 6882 / CCUG 24695 / JCM 21032 / LMG 3331 / NBRC 15819 / NCTC 12168 / Alc 37) (Ochrobactrum anthropi).